A 502-amino-acid polypeptide reads, in one-letter code: 2-isopropylmalate synthase (502 aa).

Residues Asp1, His189, His191, and Asn225 each coordinate Mn(2+). Positions 1–254 (DGEQALQASL…STNINHKEIY (254 aa)) constitute a Pyruvate carboxyltransferase domain. Residues 379–502 (CLKFFSVQSI…VNKNLKNLKK (124 aa)) form a regulatory domain region.

It belongs to the alpha-IPM synthase/homocitrate synthase family. LeuA type 1 subfamily. Homodimer. It depends on Mn(2+) as a cofactor.

The protein localises to the cytoplasm. It catalyses the reaction 3-methyl-2-oxobutanoate + acetyl-CoA + H2O = (2S)-2-isopropylmalate + CoA + H(+). It participates in amino-acid biosynthesis; L-leucine biosynthesis; L-leucine from 3-methyl-2-oxobutanoate: step 1/4. Functionally, catalyzes the condensation of the acetyl group of acetyl-CoA with 3-methyl-2-oxobutanoate (2-ketoisovalerate) to form 3-carboxy-3-hydroxy-4-methylpentanoate (2-isopropylmalate). In Buchnera aphidicola subsp. Uroleucon sonchi, this protein is 2-isopropylmalate synthase.